We begin with the raw amino-acid sequence, 305 residues long: Ribosomal RNA small subunit methyltransferase H (305 aa).

Residues 30–32, Asp-49, Phe-74, Asp-96, and Gln-103 each bind S-adenosyl-L-methionine; that span reads GGH.

This sequence belongs to the methyltransferase superfamily. RsmH family.

The protein localises to the cytoplasm. The catalysed reaction is cytidine(1402) in 16S rRNA + S-adenosyl-L-methionine = N(4)-methylcytidine(1402) in 16S rRNA + S-adenosyl-L-homocysteine + H(+). Its function is as follows. Specifically methylates the N4 position of cytidine in position 1402 (C1402) of 16S rRNA. This chain is Ribosomal RNA small subunit methyltransferase H, found in Francisella tularensis subsp. mediasiatica (strain FSC147).